The chain runs to 390 residues: Protein PIN-LIKES 3 (390 aa).

Over 1 to 14 (MVKLLELFITSSKP) the chain is Lumenal. The chain crosses the membrane as a helical span at residues 15–35 (VVEILLITSVGFYMALDGVNL). At 36–43 (LGHDARKY) the chain is on the cytoplasmic side. A helical transmembrane segment spans residues 44–61 (LNNIVFYVFSPSLIGSRL). The Lumenal portion of the chain corresponds to 62-76 (ADSVTYESLVKMWFM). A helical membrane pass occupies residues 77-97 (PVNVLLTFIIGSLLGWIVIVI). The Cytoplasmic segment spans residues 98–107 (TKPPSHLRGL). Residues 108 to 128 (ILGCCAAGNLGNMPLIIIPAV) form a helical membrane-spanning segment. Topologically, residues 129 to 144 (CKEKGGPFGDPESCQK) are lumenal. The chain crosses the membrane as a helical span at residues 145 to 165 (YGMGYVALSMAMGSIYIWTYV). Over 166 to 227 (YNLMRVLSNS…SLSQKVNLKT (62 aa)) the chain is Cytoplasmic. Residues 228–248 (IFAPSTIAAMIALVIGLITPL) form a helical membrane-spanning segment. The Lumenal portion of the chain corresponds to 249-265 (RKLIIGTEAPLRVLQDS). Residues 266-286 (VTLVGDGAVPAMTMIIGGNLL) form a helical membrane-spanning segment. Topologically, residues 287–297 (KGLRSSGMKMS) are cytoplasmic. Residues 298 to 318 (SIIGVLVARYVLLPMSGVLIV) form a helical membrane-spanning segment. Over 319-331 (RGAYKLDLVTSEP) the chain is Lumenal. Residues 332–352 (LYQFVLLLQYAVPPAMNLGTI) traverse the membrane as a helical segment. The Cytoplasmic segment spans residues 353–364 (TQLFGTGESECS). The helical transmembrane segment at 365 to 385 (VIMLWTYSLASIALTVWPTFF) threads the bilayer. Residues 386–390 (MWLVA) are Lumenal-facing.

The protein belongs to the auxin efflux carrier (TC 2.A.69.2) family. Expressed in seedlings, rosette and cauline leaves, flowers and siliques.

The protein resides in the endoplasmic reticulum membrane. Its function is as follows. Involved in cellular auxin homeostasis by regulating auxin metabolism. Regulates intracellular auxin accumulation at the endoplasmic reticulum and thus auxin availability for nuclear auxin signaling. The protein is Protein PIN-LIKES 3 (PILS3) of Arabidopsis thaliana (Mouse-ear cress).